The sequence spans 477 residues: uncharacterized protein (477 aa).

12 helical membrane passes run 31-51 (LLRL…LLGT), 60-80 (LGVP…VAPF), 103-123 (LWFG…SLIL), 130-150 (MGPA…AGVG), 177-197 (LLYV…GWLL), 205-225 (LIRV…IALW), 248-268 (AWGL…VMVG), 291-311 (VGQT…GFIW), 334-354 (IVAF…LFFA), 359-379 (IGLG…MVVV), 384-404 (GIAL…AVFI), and 433-453 (VVYV…GPLV).

This sequence belongs to the PucC family.

The protein localises to the cell membrane. This is an uncharacterized protein from Rhodobacter capsulatus (Rhodopseudomonas capsulata).